A 616-amino-acid polypeptide reads, in one-letter code: Chaperone protein HscA homolog (616 aa).

It belongs to the heat shock protein 70 family.

In terms of biological role, chaperone involved in the maturation of iron-sulfur cluster-containing proteins. Has a low intrinsic ATPase activity which is markedly stimulated by HscB. The protein is Chaperone protein HscA homolog of Mannheimia succiniciproducens (strain KCTC 0769BP / MBEL55E).